The sequence spans 221 residues: Small ribosomal subunit protein uS4c (221 aa).

Residues 26-53 (RKRTDNRCMPGQHRKKRNDSTKKTKNSK) are disordered. A compositionally biased stretch (basic residues) spans 37-53 (QHRKKRNDSTKKTKNSK). Residues 103–161 (MRLDNIVFRLGMAPTIPAARQLVNHGHIVVNNKKVDISSYQCQSQDVISVTKNKTIRTL) form the S4 RNA-binding domain.

It belongs to the universal ribosomal protein uS4 family. As to quaternary structure, part of the 30S ribosomal subunit. Contacts protein S5. The interaction surface between S4 and S5 is involved in control of translational fidelity.

It is found in the plastid. Its subcellular location is the chloroplast. In terms of biological role, one of the primary rRNA binding proteins, it binds directly to 16S rRNA where it nucleates assembly of the body of the 30S subunit. With S5 and S12 plays an important role in translational accuracy. The sequence is that of Small ribosomal subunit protein uS4c (rps4) from Pleurastrum terricola (Filamentous green alga).